A 491-amino-acid chain; its full sequence is Probable glycogen synthase 2 (491 aa).

Lys15 contributes to the ADP-alpha-D-glucose binding site.

This sequence belongs to the glycosyltransferase 1 family. Bacterial/plant glycogen synthase subfamily.

The enzyme catalyses [(1-&gt;4)-alpha-D-glucosyl](n) + ADP-alpha-D-glucose = [(1-&gt;4)-alpha-D-glucosyl](n+1) + ADP + H(+). Its pathway is glycan biosynthesis; glycogen biosynthesis. Synthesizes alpha-1,4-glucan chains using ADP-glucose. This is Probable glycogen synthase 2 (glgA2) from Synechocystis sp. (strain ATCC 27184 / PCC 6803 / Kazusa).